We begin with the raw amino-acid sequence, 1577 residues long: Pentafunctional AROM polypeptide (1577 aa).

The interval 1-392 is 3-dehydroquinate synthase; sequence MASVGLEKVN…YGTSAHVVSD (392 aa). NAD(+)-binding positions include 80 to 83, 111 to 113, and D116; these read ETYK and GGV. R127 is a 7-phospho-2-dehydro-3-deoxy-D-arabino-heptonate binding site. 136-137 contacts NAD(+); the sequence is TS. 2 residues coordinate 7-phospho-2-dehydro-3-deoxy-D-arabino-heptonate: D143 and K149. K158 contacts NAD(+). N159 contributes to the 7-phospho-2-dehydro-3-deoxy-D-arabino-heptonate binding site. Residues 176–179 and N187 contribute to the NAD(+) site; that span reads WLET. E191 contacts Zn(2+). Residues 191 to 194 and K258 each bind 7-phospho-2-dehydro-3-deoxy-D-arabino-heptonate; that span reads EVIK. E268 serves as the catalytic Proton acceptor; for 3-dehydroquinate synthase activity. Residues 272-276 and H279 contribute to the 7-phospho-2-dehydro-3-deoxy-D-arabino-heptonate site; that span reads RNLLN. Residue H279 coordinates Zn(2+). Residue H283 is the Proton acceptor; for 3-dehydroquinate synthase activity of the active site. Residues H295 and K364 each contribute to the 7-phospho-2-dehydro-3-deoxy-D-arabino-heptonate site. H295 contacts Zn(2+). The interval 405-863 is EPSP synthase; that stretch reads VYPFTDVRSS…WDVLHSRLGA (459 aa). The active-site For EPSP synthase activity is C845. The interval 882 to 1071 is shikimate kinase; that stretch reads VVLIGMRAAG…VPVKRSTFVC (190 aa). Position 886–893 (886–893) interacts with ATP; that stretch reads GMRAAGKS. The tract at residues 1072 to 1284 is 3-dehydroquinase; it reads LTFQNLLPEM…AAPGQLTLRQ (213 aa). The active-site Proton acceptor; for 3-dehydroquinate dehydratase activity is H1189. Residue K1218 is the Schiff-base intermediate with substrate; for 3-dehydroquinate dehydratase activity of the active site. The segment at 1297 to 1577 is shikimate dehydrogenase; it reads PKKMFVVGSP…APVYDAVTQE (281 aa).

The protein in the N-terminal section; belongs to the sugar phosphate cyclases superfamily. Dehydroquinate synthase family. In the 2nd section; belongs to the EPSP synthase family. It in the 3rd section; belongs to the shikimate kinase family. This sequence in the 4th section; belongs to the type-I 3-dehydroquinase family. The protein in the C-terminal section; belongs to the shikimate dehydrogenase family. Homodimer. It depends on Zn(2+) as a cofactor.

Its subcellular location is the cytoplasm. It carries out the reaction 7-phospho-2-dehydro-3-deoxy-D-arabino-heptonate = 3-dehydroquinate + phosphate. It catalyses the reaction 3-dehydroquinate = 3-dehydroshikimate + H2O. The catalysed reaction is shikimate + NADP(+) = 3-dehydroshikimate + NADPH + H(+). The enzyme catalyses shikimate + ATP = 3-phosphoshikimate + ADP + H(+). It carries out the reaction 3-phosphoshikimate + phosphoenolpyruvate = 5-O-(1-carboxyvinyl)-3-phosphoshikimate + phosphate. It functions in the pathway metabolic intermediate biosynthesis; chorismate biosynthesis; chorismate from D-erythrose 4-phosphate and phosphoenolpyruvate: step 2/7. The protein operates within metabolic intermediate biosynthesis; chorismate biosynthesis; chorismate from D-erythrose 4-phosphate and phosphoenolpyruvate: step 3/7. It participates in metabolic intermediate biosynthesis; chorismate biosynthesis; chorismate from D-erythrose 4-phosphate and phosphoenolpyruvate: step 4/7. Its pathway is metabolic intermediate biosynthesis; chorismate biosynthesis; chorismate from D-erythrose 4-phosphate and phosphoenolpyruvate: step 5/7. It functions in the pathway metabolic intermediate biosynthesis; chorismate biosynthesis; chorismate from D-erythrose 4-phosphate and phosphoenolpyruvate: step 6/7. The AROM polypeptide catalyzes 5 consecutive enzymatic reactions in prechorismate polyaromatic amino acid biosynthesis. In Eremothecium gossypii (strain ATCC 10895 / CBS 109.51 / FGSC 9923 / NRRL Y-1056) (Yeast), this protein is Pentafunctional AROM polypeptide.